The following is a 258-amino-acid chain: Thiazole synthase (258 aa).

The Schiff-base intermediate with DXP role is filled by lysine 98. 1-deoxy-D-xylulose 5-phosphate-binding positions include glycine 159, 185-186 (AG), and 207-208 (NT).

The protein belongs to the ThiG family. In terms of assembly, homotetramer. Forms heterodimers with either ThiH or ThiS.

The protein resides in the cytoplasm. The catalysed reaction is [ThiS sulfur-carrier protein]-C-terminal-Gly-aminoethanethioate + 2-iminoacetate + 1-deoxy-D-xylulose 5-phosphate = [ThiS sulfur-carrier protein]-C-terminal Gly-Gly + 2-[(2R,5Z)-2-carboxy-4-methylthiazol-5(2H)-ylidene]ethyl phosphate + 2 H2O + H(+). Its pathway is cofactor biosynthesis; thiamine diphosphate biosynthesis. Its function is as follows. Catalyzes the rearrangement of 1-deoxy-D-xylulose 5-phosphate (DXP) to produce the thiazole phosphate moiety of thiamine. Sulfur is provided by the thiocarboxylate moiety of the carrier protein ThiS. In vitro, sulfur can be provided by H(2)S. This Bacillus cereus (strain ATCC 14579 / DSM 31 / CCUG 7414 / JCM 2152 / NBRC 15305 / NCIMB 9373 / NCTC 2599 / NRRL B-3711) protein is Thiazole synthase.